The chain runs to 336 residues: Isethionate-binding periplasmic protein DctP (336 aa).

Residues Met-1–Ala-23 form the signal peptide.

Belongs to the bacterial solute-binding protein 7 family. As to quaternary structure, the complex comprises the periplasmic solute receptor protein DctP, and the fused transmembrane protein DctMQ.

It is found in the periplasm. It catalyses the reaction 2-hydroxyethane-1-sulfonate(out) + Na(+)(out) = 2-hydroxyethane-1-sulfonate(in) + Na(+)(in). Its pathway is organosulfur degradation; alkanesulfonate degradation. Part of the tripartite ATP-independent periplasmic (TRAP) transport system DctPQM involved in the uptake of isethionate (2-hydroxyethanesulfonate), which is then catabolized by enzymes encoded by adjacent genes in the locus. The DctP subunit is the solute-binding protein. Thereby is involved in an anaerobic respiration pathway that converts the sulfonate isethionate to ammonia, acetate and sulfide. The polypeptide is Isethionate-binding periplasmic protein DctP (Oleidesulfovibrio alaskensis (strain ATCC BAA-1058 / DSM 17464 / G20) (Desulfovibrio alaskensis)).